A 92-amino-acid chain; its full sequence is Parbolysin P7 (92 aa).

3 cysteine pairs are disulfide-bonded: cysteine 15–cysteine 36, cysteine 21–cysteine 32, and cysteine 46–cysteine 59.

The protein belongs to the worm cytolysin family. In terms of tissue distribution, localized within the skin and proboscis and are most readily isolated from body mucus secretions.

It is found in the secreted. Functionally, cytolysin that shows hemolytic activity (on bovine erythrocytes, HC(50)=5.75 mg/ml). This hemolytic activity is completely inhibited by small unilamelar vesicles composed of PC/PG, PC/PI and PC/PS in 1:1 molar ratios (with at least 100 mg/ml concentration). This Parborlasia corrugatus (Antarctic nemertean worm) protein is Parbolysin P7.